The primary structure comprises 92 residues: Large ribosomal subunit protein bL25 (92 aa).

Belongs to the bacterial ribosomal protein bL25 family. As to quaternary structure, part of the 50S ribosomal subunit; part of the 5S rRNA/L5/L18/L25 subcomplex. Contacts the 5S rRNA. Binds to the 5S rRNA independently of L5 and L18.

In terms of biological role, this is one of the proteins that binds to the 5S RNA in the ribosome where it forms part of the central protuberance. This is Large ribosomal subunit protein bL25 from Vibrio vulnificus (strain CMCP6).